Consider the following 230-residue polypeptide: MTKTSTCIYHFLVLSWYTFLNYYISQEGKDEVKPKILANGARWKYMTLLNLLLQTIFYGVTCLDDVLKRTKGGKDIKFLTAFRDLLFTTLAFPVSTFVFLAFWILFLYNRDLIYPKVLDTVIPVWLNHAMHTFIFPITLAEVVLRPHSYPSKKTGLTLLAAASIAYISRILWLYFETGTWVYPVFAKLSLLGLAAFFSLSYVFIASIYLLGEKLNHWKWGDMRQPRKKRK.

Residues 1–3 (MTK) are Cytoplasmic-facing. A helical transmembrane segment spans residues 4-24 (TSTCIYHFLVLSWYTFLNYYI). Residues 25-46 (SQEGKDEVKPKILANGARWKYM) are Extracellular-facing. The helical transmembrane segment at 47–67 (TLLNLLLQTIFYGVTCLDDVL) threads the bilayer. At 68–85 (KRTKGGKDIKFLTAFRDL) the chain is on the cytoplasmic side. Residues 86–106 (LFTTLAFPVSTFVFLAFWILF) traverse the membrane as a helical segment. Residues 107–119 (LYNRDLIYPKVLD) lie on the Extracellular side of the membrane. A helical membrane pass occupies residues 120-140 (TVIPVWLNHAMHTFIFPITLA). The Cytoplasmic portion of the chain corresponds to 141–154 (EVVLRPHSYPSKKT). Residues 155-175 (GLTLLAAASIAYISRILWLYF) form a helical membrane-spanning segment. Topologically, residues 176 to 189 (ETGTWVYPVFAKLS) are extracellular. A helical transmembrane segment spans residues 190–210 (LLGLAAFFSLSYVFIASIYLL). Topologically, residues 211 to 230 (GEKLNHWKWGDMRQPRKKRK) are cytoplasmic.

It belongs to the AIG1 family. As to expression, expressed in cultured endothelial cells and in placenta.

The protein localises to the cell membrane. The catalysed reaction is 9-hexadecanoyloxy-octadecanoate + H2O = 9-hydroxy-octadecanoate + hexadecanoate + H(+). It carries out the reaction 12-hexadecanoyloxy-octadecanoate + H2O = 12-hydroxyoctadecanoate + hexadecanoate + H(+). The enzyme catalyses 9-(9Z-hexadecenoyloxy)-octadecanoate + H2O = (9Z)-hexadecenoate + 9-hydroxy-octadecanoate + H(+). It catalyses the reaction 12-(9Z-hexadecenoyloxy)-octadecanoate + H2O = 12-hydroxyoctadecanoate + (9Z)-hexadecenoate + H(+). The catalysed reaction is 13-(9Z-hexadecenoyloxy)-octadecanoate + H2O = 13-hydroxy-octadecanoate + (9Z)-hexadecenoate + H(+). It carries out the reaction 9-octadecanoyloxy-octadecanoate + H2O = 9-hydroxy-octadecanoate + octadecanoate + H(+). The enzyme catalyses 12-octadecanoyloxy-octadecanoate + H2O = 12-hydroxyoctadecanoate + octadecanoate + H(+). It catalyses the reaction 13-octadecanoyloxy-octadecanoate + H2O = 13-hydroxy-octadecanoate + octadecanoate + H(+). The catalysed reaction is 9-(9Z-octadecenoyloxy)-octadecanoate + H2O = 9-hydroxy-octadecanoate + (9Z)-octadecenoate + H(+). It carries out the reaction 12-(9Z-octadecenoyloxy)-octadecanoate + H2O = 12-hydroxyoctadecanoate + (9Z)-octadecenoate + H(+). The enzyme catalyses 13-(9Z-octadecenoyloxy)-octadecanoate + H2O = 13-hydroxy-octadecanoate + (9Z)-octadecenoate + H(+). It catalyses the reaction 5-(9Z-octadecenoyloxy)-octadecanoate + H2O = 5-hydroxy-octadecanoate + (9Z)-octadecenoate + H(+). With respect to regulation, inhibited by N-hydroxyhydantoin carbamate JJH260 and beta-lactone KC01. In terms of biological role, hydrolyzes bioactive fatty-acid esters of hydroxy-fatty acids (FAHFAs), but not other major classes of lipids. Show a preference for FAHFAs with branching distal from the carboxylate head group of the lipids. Regulates the expression and the cell-associated anticoagulant activity of the inhibitor TFPI in endothelial cells (in vitro). The protein is Androgen-dependent TFPI-regulating protein (ADTRP) of Homo sapiens (Human).